Reading from the N-terminus, the 337-residue chain is Glyceraldehyde-3-phosphate dehydrogenase (337 aa).

NAD(+) is bound by residues 11–12 (RI), aspartate 33, and lysine 78. D-glyceraldehyde 3-phosphate contacts are provided by residues 149-151 (SCT), threonine 180, 209-210 (TG), and arginine 232. Cysteine 150 serves as the catalytic Nucleophile. Residue asparagine 314 coordinates NAD(+).

This sequence belongs to the glyceraldehyde-3-phosphate dehydrogenase family. As to quaternary structure, homotetramer.

It localises to the cytoplasm. The enzyme catalyses D-glyceraldehyde 3-phosphate + phosphate + NAD(+) = (2R)-3-phospho-glyceroyl phosphate + NADH + H(+). The protein operates within carbohydrate degradation; glycolysis; pyruvate from D-glyceraldehyde 3-phosphate: step 1/5. This is Glyceraldehyde-3-phosphate dehydrogenase (GPD) from Lyophyllum shimeji (Hon-shimeji).